We begin with the raw amino-acid sequence, 211 residues long: Thiamine-phosphate synthase (211 aa).

4-amino-2-methyl-5-(diphosphooxymethyl)pyrimidine contacts are provided by residues 37-41 (QLRIK) and asparagine 69. Mg(2+) contacts are provided by aspartate 70 and aspartate 89. 4-amino-2-methyl-5-(diphosphooxymethyl)pyrimidine is bound at residue serine 108. A 2-[(2R,5Z)-2-carboxy-4-methylthiazol-5(2H)-ylidene]ethyl phosphate-binding site is contributed by 134–136 (TQT). Lysine 137 provides a ligand contact to 4-amino-2-methyl-5-(diphosphooxymethyl)pyrimidine. 2-[(2R,5Z)-2-carboxy-4-methylthiazol-5(2H)-ylidene]ethyl phosphate contacts are provided by residues glycine 166 and 186–187 (VS).

It belongs to the thiamine-phosphate synthase family. Mg(2+) serves as cofactor.

The catalysed reaction is 2-[(2R,5Z)-2-carboxy-4-methylthiazol-5(2H)-ylidene]ethyl phosphate + 4-amino-2-methyl-5-(diphosphooxymethyl)pyrimidine + 2 H(+) = thiamine phosphate + CO2 + diphosphate. It catalyses the reaction 2-(2-carboxy-4-methylthiazol-5-yl)ethyl phosphate + 4-amino-2-methyl-5-(diphosphooxymethyl)pyrimidine + 2 H(+) = thiamine phosphate + CO2 + diphosphate. It carries out the reaction 4-methyl-5-(2-phosphooxyethyl)-thiazole + 4-amino-2-methyl-5-(diphosphooxymethyl)pyrimidine + H(+) = thiamine phosphate + diphosphate. Its pathway is cofactor biosynthesis; thiamine diphosphate biosynthesis; thiamine phosphate from 4-amino-2-methyl-5-diphosphomethylpyrimidine and 4-methyl-5-(2-phosphoethyl)-thiazole: step 1/1. Condenses 4-methyl-5-(beta-hydroxyethyl)thiazole monophosphate (THZ-P) and 2-methyl-4-amino-5-hydroxymethyl pyrimidine pyrophosphate (HMP-PP) to form thiamine monophosphate (TMP). This Salmonella paratyphi A (strain ATCC 9150 / SARB42) protein is Thiamine-phosphate synthase.